Here is a 428-residue protein sequence, read N- to C-terminus: UPF0761 membrane protein TERTU_3006 (428 aa).

The next 7 membrane-spanning stretches (helical) occupy residues 47–67 (LFAL…IPAF), 104–124 (LSGV…RNIE), 143–163 (YLLY…AFLL), 189–209 (VVPW…VPNC), 218–238 (IGGV…GYIV), 248–268 (GAFA…TIIL), and 292–312 (MIVV…GESV).

Belongs to the UPF0761 family.

The protein resides in the cell inner membrane. The protein is UPF0761 membrane protein TERTU_3006 of Teredinibacter turnerae (strain ATCC 39867 / T7901).